Reading from the N-terminus, the 419-residue chain is MHKLIIHGGKPLKGSINISGAKNAVLPIMAASILTDKLHITNVPKLTDVGTMKDLLRSHGADIEIIEHQDEFELIINTENINNFTADYEIVRKMRASIWVLGPLLTKYGKAKVSLPGGCAIGARQVDLHIAVLKAMGATIEIEDGYINASSKGRLKGTHFVFDKVSVGATINAILAAVLTEGETVLFNCGREPEIVDLCNCLITMGADIAGIGTSEITIKGKDSLNKASYKVLSDRIEAGTYMFAAAITKGDVKICGIDYHIVENIALKLIETGIKVVPINNGVQVTYEGKLNSVDLETNPYPGFATDLQAQFMSLMTLSSGVSMITENIFENRFMHVPELCRMGADIVVRGNKAVVRGVEMLKGAEVMASDLRASVSLILAGLSTNSKTVLHRIYHLDRGFQDLEKKLSNCGADIKRV.

22 to 23 lines the phosphoenolpyruvate pocket; the sequence is KN. Arginine 95 is a binding site for UDP-N-acetyl-alpha-D-glucosamine. The active-site Proton donor is the cysteine 119. The residue at position 119 (cysteine 119) is a 2-(S-cysteinyl)pyruvic acid O-phosphothioketal. Residues 164–167, aspartate 308, and isoleucine 330 each bind UDP-N-acetyl-alpha-D-glucosamine; that span reads KVSV.

This sequence belongs to the EPSP synthase family. MurA subfamily.

The protein resides in the cytoplasm. It catalyses the reaction phosphoenolpyruvate + UDP-N-acetyl-alpha-D-glucosamine = UDP-N-acetyl-3-O-(1-carboxyvinyl)-alpha-D-glucosamine + phosphate. The protein operates within cell wall biogenesis; peptidoglycan biosynthesis. Cell wall formation. Adds enolpyruvyl to UDP-N-acetylglucosamine. The chain is UDP-N-acetylglucosamine 1-carboxyvinyltransferase from Rickettsia massiliae (strain Mtu5).